The chain runs to 940 residues: Phosphoenolpyruvate carboxylase (940 aa).

Catalysis depends on residues His-138 and Lys-603.

This sequence belongs to the PEPCase type 1 family. The cofactor is Mg(2+).

It carries out the reaction oxaloacetate + phosphate = phosphoenolpyruvate + hydrogencarbonate. Functionally, forms oxaloacetate, a four-carbon dicarboxylic acid source for the tricarboxylic acid cycle. This chain is Phosphoenolpyruvate carboxylase, found in Streptococcus thermophilus (strain CNRZ 1066).